We begin with the raw amino-acid sequence, 258 residues long: Isoprenyl transferase (258 aa).

Asp38 is an active-site residue. Asp38 provides a ligand contact to Mg(2+). Substrate-binding positions include 39 to 42 (GNGR), Trp43, Arg51, His55, and 83 to 85 (STE). The active-site Proton acceptor is the Asn86. Residues Trp87, Arg89, Arg206, and 212–214 (RIS) each bind substrate. Mg(2+) is bound at residue Glu225.

This sequence belongs to the UPP synthase family. As to quaternary structure, homodimer. It depends on Mg(2+) as a cofactor.

In terms of biological role, catalyzes the condensation of isopentenyl diphosphate (IPP) with allylic pyrophosphates generating different type of terpenoids. This Bacillus cereus (strain ATCC 14579 / DSM 31 / CCUG 7414 / JCM 2152 / NBRC 15305 / NCIMB 9373 / NCTC 2599 / NRRL B-3711) protein is Isoprenyl transferase.